Here is a 203-residue protein sequence, read N- to C-terminus: Ribosome maturation factor RimP (203 aa).

Residues 183 to 203 are disordered; that stretch reads FDDIETEGSAEGTTGSEEENK.

Belongs to the RimP family.

The protein resides in the cytoplasm. Its function is as follows. Required for maturation of 30S ribosomal subunits. The chain is Ribosome maturation factor RimP from Ruegeria sp. (strain TM1040) (Silicibacter sp.).